The following is a 449-amino-acid chain: C4-dicarboxylate transport protein 1 (449 aa).

A run of 9 helical transmembrane segments spans residues S14–P34, F47–I67, S83–Y103, I157–Q177, I195–T215, L226–G246, F312–A332, V359–V379, and F385–I405.

It belongs to the dicarboxylate/amino acid:cation symporter (DAACS) (TC 2.A.23) family.

It is found in the cell inner membrane. In terms of biological role, responsible for the transport of dicarboxylates such as succinate, fumarate, and malate from the periplasm across the membrane. The sequence is that of C4-dicarboxylate transport protein 1 from Pseudomonas aeruginosa (strain UCBPP-PA14).